A 121-amino-acid chain; its full sequence is HTH-type transcriptional regulator Rv1152 (121 aa).

In terms of domain architecture, HTH gntR-type spans 15–83 (KPLFDQLRTQ…GRFGTFISRF (69 aa)). The segment at residues 43–62 (VRDLAGQLGVAANTVARAYR) is a DNA-binding region (H-T-H motif).

It is found in the cytoplasm. The protein resides in the secreted. It localises to the cell wall. In terms of biological role, transcriptional regulator that modulates resistance to vancomycin and aminoglycosides. Negatively regulates the expression of several genes responsive to vancomycin, resulting in decreased susceptibility of bacteria to vancomycin. Negatively regulates the expression of genes encoding the ribosome binding protein Hsp, the small subunit of sulfate adenylyltransferase CysD, the L-lysine-epsilon aminotransferase LAT and the protease HtpX. Also modulates purine metabolism and aminoglycoside antibiotic resistance. Negatively regulates the expression of purine metabolism-related genes and the accumulation of purine metabolites, which affects aminoglycoside antibiotic resistance. The sequence is that of HTH-type transcriptional regulator Rv1152 from Mycobacterium tuberculosis (strain ATCC 25618 / H37Rv).